A 329-amino-acid polypeptide reads, in one-letter code: GTP 3',8-cyclase (329 aa).

Residues 8 to 234 (AFARKFYYLR…QLRQRSDGPA (227 aa)) enclose the Radical SAM core domain. Position 17 (arginine 17) interacts with GTP. Cysteine 24 and cysteine 28 together coordinate [4Fe-4S] cluster. Residue tyrosine 30 coordinates S-adenosyl-L-methionine. Residue cysteine 31 participates in [4Fe-4S] cluster binding. Arginine 68 provides a ligand contact to GTP. Glycine 72 is an S-adenosyl-L-methionine binding site. Threonine 99 lines the GTP pocket. Position 123 (serine 123) interacts with S-adenosyl-L-methionine. Residue lysine 160 coordinates GTP. S-adenosyl-L-methionine is bound at residue methionine 194. Residues cysteine 257 and cysteine 260 each contribute to the [4Fe-4S] cluster site. 262 to 264 (RLR) is a binding site for GTP. Cysteine 274 provides a ligand contact to [4Fe-4S] cluster.

This sequence belongs to the radical SAM superfamily. MoaA family. Monomer and homodimer. Requires [4Fe-4S] cluster as cofactor.

The catalysed reaction is GTP + AH2 + S-adenosyl-L-methionine = (8S)-3',8-cyclo-7,8-dihydroguanosine 5'-triphosphate + 5'-deoxyadenosine + L-methionine + A + H(+). The protein operates within cofactor biosynthesis; molybdopterin biosynthesis. In terms of biological role, catalyzes the cyclization of GTP to (8S)-3',8-cyclo-7,8-dihydroguanosine 5'-triphosphate. The sequence is that of GTP 3',8-cyclase from Escherichia coli (strain K12 / MC4100 / BW2952).